The chain runs to 401 residues: Tyrosine--tRNA ligase (401 aa).

The short motif at 42-51 (PTAPDIHLGH) is the 'HIGH' region element. A 'KMSKS' region motif is present at residues 226–230 (KMSKS). Lysine 229 serves as a coordination point for ATP. Residues 334 to 394 (MGLATLLKEA…GKRKFARVRL (61 aa)) form the S4 RNA-binding domain.

It belongs to the class-I aminoacyl-tRNA synthetase family. TyrS type 2 subfamily. Homodimer.

It is found in the cytoplasm. The enzyme catalyses tRNA(Tyr) + L-tyrosine + ATP = L-tyrosyl-tRNA(Tyr) + AMP + diphosphate + H(+). In terms of biological role, catalyzes the attachment of tyrosine to tRNA(Tyr) in a two-step reaction: tyrosine is first activated by ATP to form Tyr-AMP and then transferred to the acceptor end of tRNA(Tyr). The chain is Tyrosine--tRNA ligase from Haemophilus influenzae (strain ATCC 51907 / DSM 11121 / KW20 / Rd).